We begin with the raw amino-acid sequence, 340 residues long: Glycerol-3-phosphate dehydrogenase [NAD(P)+] (340 aa).

4 residues coordinate NADPH: Ser11, Trp12, Arg33, and Lys106. The sn-glycerol 3-phosphate site is built by Lys106, Gly137, and Ser139. An NADPH-binding site is contributed by Ala141. 5 residues coordinate sn-glycerol 3-phosphate: Lys192, Asp245, Ser255, Arg256, and Asn257. Catalysis depends on Lys192, which acts as the Proton acceptor. Arg256 contacts NADPH. NADPH is bound by residues Val280 and Glu282.

This sequence belongs to the NAD-dependent glycerol-3-phosphate dehydrogenase family.

It is found in the cytoplasm. The enzyme catalyses sn-glycerol 3-phosphate + NAD(+) = dihydroxyacetone phosphate + NADH + H(+). It carries out the reaction sn-glycerol 3-phosphate + NADP(+) = dihydroxyacetone phosphate + NADPH + H(+). Its pathway is membrane lipid metabolism; glycerophospholipid metabolism. Its function is as follows. Catalyzes the reduction of the glycolytic intermediate dihydroxyacetone phosphate (DHAP) to sn-glycerol 3-phosphate (G3P), the key precursor for phospholipid synthesis. The sequence is that of Glycerol-3-phosphate dehydrogenase [NAD(P)+] from Bacillus cereus (strain B4264).